A 159-amino-acid chain; its full sequence is MPRKGPVKPREIMPDPIYRDVLVHKLINKVMVDGKKSKAEKIVYGAMQILAEKTGEQPLEALHKAIENLKPILEVRPRRVGGATYQVPMEVPPRRQISLALRWLVEAARNRSGRGNYTMLEKLSNELLDAYHNRGNAIKKREDTHRMAEANKAFAHYKW.

The protein belongs to the universal ribosomal protein uS7 family. In terms of assembly, part of the 30S ribosomal subunit. Contacts proteins S9 and S11.

One of the primary rRNA binding proteins, it binds directly to 16S rRNA where it nucleates assembly of the head domain of the 30S subunit. Is located at the subunit interface close to the decoding center, probably blocks exit of the E-site tRNA. This is Small ribosomal subunit protein uS7 from Sulfurihydrogenibium sp. (strain YO3AOP1).